Reading from the N-terminus, the 293-residue chain is Elongation factor Ts (293 aa).

An involved in Mg(2+) ion dislocation from EF-Tu region spans residues 79 to 82; that stretch reads TDFV.

This sequence belongs to the EF-Ts family.

The protein resides in the cytoplasm. Its function is as follows. Associates with the EF-Tu.GDP complex and induces the exchange of GDP to GTP. It remains bound to the aminoacyl-tRNA.EF-Tu.GTP complex up to the GTP hydrolysis stage on the ribosome. The chain is Elongation factor Ts from Bacillus licheniformis (strain ATCC 14580 / DSM 13 / JCM 2505 / CCUG 7422 / NBRC 12200 / NCIMB 9375 / NCTC 10341 / NRRL NRS-1264 / Gibson 46).